Here is a 1228-residue protein sequence, read N- to C-terminus: MKGARLFVLLSSLWSGGIGLNNSKHSWTIPEDGNSQKTMPSASVPPNKIQSLQILPTTRVMSAEIATTPEARTSEDSLLKSTLPPSETSAPAEGVRNQTLTSTEKAEGVVKLQNLTLPTNASIKFNPGAESVVLSNSTLKFLQSFARKSNEQATSLNTVGGTGGIGGVGGTGGVGNRAPRETYLSRGDSSSSQRTDYQKSNFETTRGKNWCAYVHTRLSPTVILDNQVTYVPGGKGPCGWTGGSCPQRSQKISNPVYRMQHKIVTSLDWRCCPGYSGPKCQLRAQEQQSLIHTNQAESHTAVGRGVAEQQQQQGCGDPEVMQKMTDQVNYQAMKLTLLQKKIDNISLTVNDVRNTYSSLEGKVSEDKSREFQSLLKGLKSKSINVLIRDIVREQFKIFQNDMQETVAQLFKTVSSLSEDLESTRQIIQKVNESVVSIAAQQKFVLVQENRPTLTDIVELRNHIVNVRQEMTLTCEKPIKELEVKQTHLEGALEQEHSRSILYYESLNKTLSKLKEVHEQLLSTEQVSDQKNAPAAESVSNNVTEYMSTLHENIKKQSLMMLQMFEDLHIQESKINNLTVSLEMEKESLRGECEDMLSKCRNDFKFQLKDTEENLHVLNQTLAEVLFPMDNKMDKMSEQLNDLTYDMEILQPLLEQGASLRQTMTYEQPKEAIVIRKKIENLTSAVNSLNFIIKELTKRHNLLRNEVQGRDDALERRINEYALEMEDGLNKTMTIINNAIDFIQDNYALKETLSTIKDNSEIHHKCTSDMETILTFIPQFHRLNDSIQTLVNDNQRYNFVLQVAKTLAGIPRDEKLNQSNFQKMYQMFNETTSQVRKYQQNMSHLEEKLLLTTKISKNFETRLQDIESKVTQTLIPYYISVKKGSVVTNERDQALQLQVLNSRFKALEAKSIHLSINFFSLNKTLHEVLTMCHNASTSVSELNATIPKWIKHSLPDIQLLQKGLTEFVEPIIQIKTQAALSNLTCCIDRSLPGSLANVVKSQKQVKSLPKKINALKKPTVNLTTVLIGRTQRNTDNIIYPEEYSSCSRHPCQNGGTCINGRTSFTCACRHPFTGDNCTIKLVEENALAPDFSKGSYRYAPMVAFFASHTYGMTIPGPILFNNLDVNYGASYTPRTGKFRIPYLGVYVFKYTIESFSAHISGFLVVDGIDKLAFESENINSEIHCDRVLTGDALLELNYGQEVWLRLAKGTIPAKFPPVTTFSGYLLYRT.

The first 19 residues, 1–19, serve as a signal peptide directing secretion; that stretch reads MKGARLFVLLSSLWSGGIG. N-linked (GlcNAc...) asparagine glycosylation occurs at Asn-21. The segment at 68–98 is disordered; that stretch reads TPEARTSEDSLLKSTLPPSETSAPAEGVRNQ. The segment covering 79–89 has biased composition (polar residues); sequence LKSTLPPSETS. N-linked (GlcNAc...) asparagine glycosylation is found at Asn-97, Asn-114, and Asn-120. An N-linked (GlcNAc...) (complex) asparagine glycan is attached at Asn-136. Positions 157–200 are disordered; that stretch reads NTVGGTGGIGGVGGTGGVGNRAPRETYLSRGDSSSSQRTDYQKS. A compositionally biased stretch (gly residues) spans 160–175; that stretch reads GGTGGIGGVGGTGGVG. The short motif at 186-188 is the Cell attachment site element; it reads RGD. The span at 187-200 shows a compositional bias: polar residues; that stretch reads GDSSSSQRTDYQKS. One can recognise an EMI domain in the interval 207–282; it reads GKNWCAYVHT…PGYSGPKCQL (76 aa). 3 disulfides stabilise this stretch: Cys-211/Cys-272, Cys-238/Cys-245, and Cys-271/Cys-280. Thr-216 carries O-linked (Fuc) threonine glycosylation. Thr-265 carries O-linked (Fuc) threonine glycosylation. Coiled coils occupy residues 333–365 and 400–430; these read MKLT…KVSE and NDMQ…IQKV. Asn-344 is a glycosylation site (N-linked (GlcNAc...) asparagine). Residues Asn-431, Asn-507, Asn-541, Asn-576, Asn-618, Asn-680, Asn-729, Asn-783, Asn-816, Asn-828, Asn-840, Asn-921, Asn-933, Asn-942, Asn-981, and Asn-1020 are each glycosylated (N-linked (GlcNAc...) asparagine). A coiled-coil region spans residues 503–523; that stretch reads YESLNKTLSKLKEVHEQLLST. 2 coiled-coil regions span residues 580-650 and 675-726; these read SLEM…EILQ and RKKI…EMED. Residues 819–869 adopt a coiled-coil conformation; that stretch reads NFQKMYQMFNETTSQVRKYQQNMSHLEEKLLLTTKISKNFETRLQDIESKV. In terms of domain architecture, EGF-like spans 1041 to 1077; the sequence is EYSSCSRHPCQNGGTCINGRTSFTCACRHPFTGDNCT. Intrachain disulfides connect Cys-1045/Cys-1056, Cys-1050/Cys-1065, and Cys-1067/Cys-1076. O-linked (Fuc) threonine glycosylation is present at Thr-1055. Residue Asn-1075 is glycosylated (N-linked (GlcNAc...) asparagine). The region spanning 1096 to 1228 is the C1q domain; sequence RYAPMVAFFA…TFSGYLLYRT (133 aa).

In terms of assembly, multimeric. Composed of varying sized, disulfide-linked multimers, the smallest of which is a homotrimer. Proteolysis of the promultimerin in the N-terminal region, leads to the mature p155 form that is stored in platelets. Interacts with factor V/Va. Post-translationally, the N-terminus is blocked. Extensively N-glycosylated. In terms of processing, O-fucosylated within the EMI domain (at Thr-216 and Thr-265) by FUT10/POFUT3 and FUT11/POFUT4. O-fucosylation at Thr-216 and Thr-1055 are required for facilitating protein folding and secretion. As to expression, synthesized by endothelial cells and megakaryocytes. Stored in platelet alpha granules and endothelial cell Weibel-Palade bodies, following activation of these cells, it is released and attached to megakaryocytes, platelets, endothelium and subendothelium of blood vessels. Not found in plasma. Found in vascular tissues such as placenta, lung, and liver.

The protein localises to the secreted. Its function is as follows. Carrier protein for platelet (but not plasma) factor V/Va. Plays a role in the storage and stabilization of factor V in platelets. Upon release following platelet activation, may limit platelet and plasma factor Va-dependent thrombin generation. Ligand for integrin alpha-IIb/beta-3 and integrin alpha-V/beta-3 on activated platelets, and may function as an extracellular matrix or adhesive protein. This is Multimerin-1 (MMRN1) from Homo sapiens (Human).